Consider the following 426-residue polypeptide: Serine--tRNA ligase (426 aa).

Threonine 233–glutamate 235 serves as a coordination point for L-serine. Arginine 264 to glutamate 266 contributes to the ATP binding site. Glutamate 287 is an L-serine binding site. Glutamate 351 to serine 354 lines the ATP pocket. Serine 387 contacts L-serine.

It belongs to the class-II aminoacyl-tRNA synthetase family. Type-1 seryl-tRNA synthetase subfamily. Homodimer. The tRNA molecule binds across the dimer.

Its subcellular location is the cytoplasm. The catalysed reaction is tRNA(Ser) + L-serine + ATP = L-seryl-tRNA(Ser) + AMP + diphosphate + H(+). It carries out the reaction tRNA(Sec) + L-serine + ATP = L-seryl-tRNA(Sec) + AMP + diphosphate + H(+). Its pathway is aminoacyl-tRNA biosynthesis; selenocysteinyl-tRNA(Sec) biosynthesis; L-seryl-tRNA(Sec) from L-serine and tRNA(Sec): step 1/1. Functionally, catalyzes the attachment of serine to tRNA(Ser). Is also able to aminoacylate tRNA(Sec) with serine, to form the misacylated tRNA L-seryl-tRNA(Sec), which will be further converted into selenocysteinyl-tRNA(Sec). The chain is Serine--tRNA ligase from Azotobacter vinelandii (strain DJ / ATCC BAA-1303).